Here is a 145-residue protein sequence, read N- to C-terminus: Large ribosomal subunit protein uL14m (145 aa).

A mitochondrion-targeting transit peptide spans 1–30 (MAVLTGLFGFFAYVRGAVSQRCFSTSGSLS).

This sequence belongs to the universal ribosomal protein uL14 family. Component of the mitochondrial ribosome large subunit (39S) which comprises a 16S rRNA and about 50 distinct proteins. Interacts with MALSU1.

The protein localises to the mitochondrion. Functionally, may form part of 2 intersubunit bridges in the assembled ribosome. Upon binding to MALSU1, intersubunit bridge formation is blocked, preventing ribosome formation and repressing translation. The polypeptide is Large ribosomal subunit protein uL14m (Mrpl14) (Rattus norvegicus (Rat)).